The primary structure comprises 399 residues: Glutamyl-tRNA reductase (399 aa).

Substrate contacts are provided by residues 45–48 (TCNR), S101, 106–108 (EDQ), and Q112. The Nucleophile role is filled by C46. An NADP(+)-binding site is contributed by 177–182 (GFGKIG).

The protein belongs to the glutamyl-tRNA reductase family. In terms of assembly, homodimer.

The enzyme catalyses (S)-4-amino-5-oxopentanoate + tRNA(Glu) + NADP(+) = L-glutamyl-tRNA(Glu) + NADPH + H(+). Its pathway is porphyrin-containing compound metabolism; protoporphyrin-IX biosynthesis; 5-aminolevulinate from L-glutamyl-tRNA(Glu): step 1/2. Its function is as follows. Catalyzes the NADPH-dependent reduction of glutamyl-tRNA(Glu) to glutamate 1-semialdehyde (GSA). This Clostridium kluyveri (strain ATCC 8527 / DSM 555 / NBRC 12016 / NCIMB 10680 / K1) protein is Glutamyl-tRNA reductase.